The primary structure comprises 296 residues: MSEYLEYQNAIEGKTMANKKTFKQAPLPFIGQKRMFLKHVEIVLNKHIDGEGEGWTIVDVFGGSGLLSHTAKQLKPKATVIYNDFDGYAERLNHIDDINRLRQIIFNCLHGIIPKNGRLSKEIKEEIINKINDFKGYKDLNCLASWLLFSGQQVGSVEALFAKDFWNCVRQSDYPTAEGYLDGIEVISESFHKLIPRYQNQDKVLLLLDPPYLCTRQESYKQATYFDLIDFLRLINLTKPPYIFFSSTKSEFIRYLNYMQESKTDNWRAFENYKRIVVKASASKDGIYEDNMIYKF.

Belongs to the N(4)/N(6)-methyltransferase family.

The sequence is that of Putative methyltransferase HI_1523 from Haemophilus influenzae (strain ATCC 51907 / DSM 11121 / KW20 / Rd).